The following is a 316-amino-acid chain: Transaldolase A (316 aa).

The active-site Schiff-base intermediate with substrate is lysine 131.

The protein belongs to the transaldolase family. Type 1 subfamily. As to quaternary structure, homodimer.

It is found in the cytoplasm. The catalysed reaction is D-sedoheptulose 7-phosphate + D-glyceraldehyde 3-phosphate = D-erythrose 4-phosphate + beta-D-fructose 6-phosphate. Its pathway is carbohydrate degradation; pentose phosphate pathway; D-glyceraldehyde 3-phosphate and beta-D-fructose 6-phosphate from D-ribose 5-phosphate and D-xylulose 5-phosphate (non-oxidative stage): step 2/3. Transaldolase is important for the balance of metabolites in the pentose-phosphate pathway. The protein is Transaldolase A of Shigella flexneri.